Consider the following 642-residue polypeptide: MEERGSPDGDPARNLEQGPEGSETPIQVVLRVRPMSTVELRRGEQSALHCSGTRTLQVSPDVAFRFGAVLDGARTQEDVFRACGVKRLGELALRGFSCTVFTFGQTGSGKTYTLTGPPPQGEGVPVPPSLAGIMQRTFTWLLDRVQHLDSPVTLRASYLEIYNEQVWDLLSLGSPRPLPVRWTKARGFYVEQLRVVEFGSLEALMELLQMGLSRRRSSSHTLNQASSRSHALLTLHISRPTSQQVPPVDLGEPPVGGKLCFVDLAGSEKVAATGSQGQLMLEANSINRSLLALGHCISLLLDPQRKQNHIPFRDSKLTKLLADSLGGRGVTLMVACVSPSAQCLPETLSTLRYASRAQRITTRPQGPKSPGVKPPQQVENELLRLQEENRHLRFQLDQMHTTAPGAHGARMAWAQRNLYGMLQEFMLENERLRKEMRQLRSSRDLARAEQRVLAQQVHDLERRLLSACPLPQQGSTPVCPCRMVPAASCHALPPLCYCHHFCPLCRVPLAHWTCPRRECHMPQVLEPEAPGHISQSVWPPPWAPPPSPGSAKPPRERSQSDWTQTRVLAEMLMGEEVVPSAPPLSAGPSNMPYGLRGGSGIPNLTPRLETLTQQINSSLHLSQRQPQPSEDTQSPGQGLSSC.

The span at 1–13 (MEERGSPDGDPAR) shows a compositional bias: basic and acidic residues. A disordered region spans residues 1–25 (MEERGSPDGDPARNLEQGPEGSETP). Serine 6 carries the phosphoserine modification. A Kinesin motor domain is found at 25-360 (PIQVVLRVRP…LRYASRAQRI (336 aa)). 104-111 (GQTGSGKT) lines the ATP pocket. Serine 369 carries the post-translational modification Phosphoserine. A coiled-coil region spans residues 376 to 465 (QQVENELLRL…QVHDLERRLL (90 aa)). 2 disordered regions span residues 531-561 (GHISQSVWPPPWAPPPSPGSAKPPRERSQSD) and 579-642 (PSAP…LSSC). The segment covering 538-548 (WPPPWAPPPSP) has biased composition (pro residues). Polar residues predominate over residues 610-642 (TLTQQINSSLHLSQRQPQPSEDTQSPGQGLSSC). Serine 634 is subject to Phosphoserine.

It belongs to the TRAFAC class myosin-kinesin ATPase superfamily. Kinesin family. Expressed in the liver.

It is found in the cytoplasm. Its subcellular location is the cytoskeleton. The polypeptide is Kinesin-like protein KIF12 (Kif12) (Mus musculus (Mouse)).